Reading from the N-terminus, the 64-residue chain is Large ribosomal subunit protein bL35 (64 aa).

The disordered stretch occupies residues 1–44 (MPKLKTNRGAAKRFKVKASGRISRARSNHSHILTKKDPKRKRRL). Basic residues predominate over residues 10–44 (AAKRFKVKASGRISRARSNHSHILTKKDPKRKRRL).

It belongs to the bacterial ribosomal protein bL35 family.

In Halorhodospira halophila (strain DSM 244 / SL1) (Ectothiorhodospira halophila (strain DSM 244 / SL1)), this protein is Large ribosomal subunit protein bL35.